We begin with the raw amino-acid sequence, 1077 residues long: TSC22 domain family protein 1 (1077 aa).

The segment at 1 to 98 (MHQPPESTAA…SQAQLQGQPL (98 aa)) is required for interaction with TGFBR1 and promotion of TGF-beta signaling. 5 disordered regions span residues 22–112 (MAHP…SGFQ), 125–283 (ISSN…VPSS), 458–492 (QTPT…SVGS), 842–874 (SSAA…GSLV), and 909–947 (QAIG…SDGS). Over residues 58–70 (FPPPSLLQPPPPA) the composition is skewed to pro residues. Over residues 84–96 (SLNLLSQAQLQGQ) the composition is skewed to low complexity. Positions 133 to 142 (EDTESYDDLD) are enriched in acidic residues. Basic residues predominate over residues 216-240 (HPHHLHHHHHPHHGHHLHHGHHHSS). The residue at position 263 (Ser263) is a Phosphoserine. Low complexity predominate over residues 471 to 489 (TSGSSVSSSVSTLSHYTES). Residues 852–874 (VPTNLVPPQNIAQPPATQNGSLV) are compositionally biased toward polar residues. Residues 933–947 (MSGDSGGMSAVSDGS) show a composition bias toward low complexity. Residues 1010-1031 (LKEQIKELIEKNSQLEQENNLL) are leucine-zipper. Residues 1042–1077 (QFQAQLQTGSPPATTQPQGTTQPPAQPASQGSGSTA) are disordered. The segment covering 1048-1077 (QTGSPPATTQPQGTTQPPAQPASQGSGSTA) has biased composition (low complexity).

Belongs to the TSC-22/Dip/Bun family. In terms of assembly, forms homodimers. Forms heterodimers. Component of a complex composed of TSC22D1 (via N-terminus), TGFBR1 and TGFBR2; the interaction between TSC22D1 and TGFBR1 is inhibited by SMAD7 and promoted by TGFB1. Interacts with SMAD7; the interaction requires TGF-beta and the interaction is inhibited by TGFBR1. Interacts with TPT1/fortilin; interaction results in the destabilization of TSC22D1 protein and prevents TSC22D1-mediated apoptosis. Interacts with SMAD4 (via N-terminus). Interacts with ACVRL1/ALK1, ACVR1/ALK2, BMPR1A/ALK3, ACVR1B/ALK4, BMPR1B/ALK6, ACVR2A/ACTRII, and BMPR2. Interacts with SMAD6. Interacts with TFE3; the interaction is enhanced in the presence of TGF-beta. As to quaternary structure, forms a heterodimer with TSC22D4/THG1. Forms a heterodimer with TSC22D4/THG1. Interacts with histone H1-2. Interacts with GNL3. In terms of tissue distribution, expressed in bone marrow cells (at protein level). Expressed in T-cells. Expressed in the brain. Expressed in the myoepithelial cells of the mammary gland ducts and alveoli, expression is consistent throughout pregnancy, lactation and involution (at protein level). Expressed in the cortex, medulla and papilla of the kidney. As to expression, expressed in the myoepithelial cells of the mammary gland, expression significantly increases in the secretory luminal epithelium of the mammary gland at the initiation of involution, with levels decreasing from day 3 of involution onwards (at protein level). Expressed in the cortex, medulla and papilla of the kidney.

The protein localises to the cytoplasm. It localises to the nucleus. Its subcellular location is the cell membrane. It is found in the mitochondrion. Transcriptional repressor. Acts on the C-type natriuretic peptide (CNP) promoter. Acts to promote CASP3-mediated apoptosis. Positively regulates TGF-beta signaling by interacting with SMAD7 which inhibits binding of SMAD7 to TGFBR1, preventing recruitment of SMURF ubiquitin ligases to TGFBR1 and inhibiting SMURF-mediated ubiquitination and degradation of TGFBR1. Contributes to enhancement of TGF-beta signaling by binding to and modulating the transcription activator activity of SMAD4. Promotes TGF-beta-induced transcription of COL1A2; via its interaction with TFE3 at E-boxes in the gene proximal promoter. Plays a role in the repression of hematopoietic precursor cell growth. Promotes IL2 deprivation-induced apoptosis in T-lymphocytes, via repression of TSC22D3/GILZ transcription and activation of the caspase cascade. Functionally, may act to negatively regulate TGFB3 signaling and thereby inhibit cell death in mammary gland cells. Its function is as follows. Positively regulates cell death in response to TGFB3 during mammary gland involution. This is TSC22 domain family protein 1 from Mus musculus (Mouse).